Consider the following 170-residue polypeptide: NADH-quinone oxidoreductase subunit B (170 aa).

The [4Fe-4S] cluster site is built by C37, C38, C102, and C131.

This sequence belongs to the complex I 20 kDa subunit family. NDH-1 is composed of 14 different subunits. Subunits NuoB, C, D, E, F, and G constitute the peripheral sector of the complex. The cofactor is [4Fe-4S] cluster.

It is found in the cell inner membrane. The catalysed reaction is a quinone + NADH + 5 H(+)(in) = a quinol + NAD(+) + 4 H(+)(out). In terms of biological role, NDH-1 shuttles electrons from NADH, via FMN and iron-sulfur (Fe-S) centers, to quinones in the respiratory chain. The immediate electron acceptor for the enzyme in this species is believed to be ubiquinone. Couples the redox reaction to proton translocation (for every two electrons transferred, four hydrogen ions are translocated across the cytoplasmic membrane), and thus conserves the redox energy in a proton gradient. This chain is NADH-quinone oxidoreductase subunit B, found in Geotalea daltonii (strain DSM 22248 / JCM 15807 / FRC-32) (Geobacter daltonii).